The chain runs to 334 residues: HTH-type transcriptional repressor PurR (334 aa).

An HTH lacI-type domain is found at 2-56 (ATIKDVARLAGVSTTTVSHVINKTRFVAEATQEKVMKAVDELNYAPSAVARSLKC). A DNA-binding region (H-T-H motif) is located at residues 4-23 (IKDVARLAGVSTTTVSHVIN). A DNA-binding region spans residues 48–56 (SAVARSLKC). Residues F73, K189, F220, and D274 each contribute to the hypoxanthine site.

As to quaternary structure, homodimer.

Its pathway is purine metabolism; purine nucleotide biosynthesis [regulation]. Is the main repressor of the genes involved in the de novo synthesis of purine nucleotides, regulating purB, purC, purEK, purF, purHD, purL, purMN and guaBA expression. PurR is allosterically activated to bind its cognate DNA by binding the purine corepressors, hypoxanthine or guanine, thereby effecting transcription repression. This is HTH-type transcriptional repressor PurR from Vibrio vulnificus (strain CMCP6).